Reading from the N-terminus, the 200-residue chain is ATP synthase subunit b 2 (200 aa).

Residues 1-16 (MAEQNILTTPSPNADT) are compositionally biased toward polar residues. The disordered stretch occupies residues 1 to 38 (MAEQNILTTPSPNADTTIVPPGSPHTHTEQPSGGHGGA). A helical membrane pass occupies residues 46 to 66 (TFLAQLIWLALAFGLLYYLMS).

The protein belongs to the ATPase B chain family. As to quaternary structure, F-type ATPases have 2 components, F(1) - the catalytic core - and F(0) - the membrane proton channel. F(1) has five subunits: alpha(3), beta(3), gamma(1), delta(1), epsilon(1). F(0) has three main subunits: a(1), b(2) and c(10-14). The alpha and beta chains form an alternating ring which encloses part of the gamma chain. F(1) is attached to F(0) by a central stalk formed by the gamma and epsilon chains, while a peripheral stalk is formed by the delta and b chains.

It is found in the cell inner membrane. In terms of biological role, f(1)F(0) ATP synthase produces ATP from ADP in the presence of a proton or sodium gradient. F-type ATPases consist of two structural domains, F(1) containing the extramembraneous catalytic core and F(0) containing the membrane proton channel, linked together by a central stalk and a peripheral stalk. During catalysis, ATP synthesis in the catalytic domain of F(1) is coupled via a rotary mechanism of the central stalk subunits to proton translocation. Functionally, component of the F(0) channel, it forms part of the peripheral stalk, linking F(1) to F(0). The b'-subunit is a diverged and duplicated form of b found in plants and photosynthetic bacteria. This is ATP synthase subunit b 2 (atpF2) from Methylorubrum populi (strain ATCC BAA-705 / NCIMB 13946 / BJ001) (Methylobacterium populi).